Consider the following 125-residue polypeptide: Calcitonin receptor-stimulating peptide 1 (125 aa).

The first 25 residues, 1–25 (MGFWKFPPFLVLSILVLYQAGMFHA), serve as a signal peptide directing secretion. Positions 26-77 (APFRSVFDGRFDPATLDEEESRLLLAAMVNDYEQMRTRESEKAQKTEGSRIQ) are excised as a propeptide. The cysteines at positions 81 and 86 are disulfide-linked.

This sequence belongs to the calcitonin family.

The protein resides in the secreted. Functionally, stimulates cAMP production via the calcitonin receptor (CT) but not via the CT-like (CL) receptor. The chain is Calcitonin receptor-stimulating peptide 1 (CRSP1) from Ovis aries (Sheep).